A 426-amino-acid chain; its full sequence is Pannexin-1 (426 aa).

The Cytoplasmic segment spans residues 1 to 40 (MAIAHLATEYVFSDFLLKEPTEPKFKGLRLELAVDKMVTC). Position 40 is an S-nitrosocysteine (C40). The chain crosses the membrane as a helical span at residues 41–61 (IAVGLPLLLISLAFAQEISIG). Residues 62-106 (TQISCFSPSSFSWRQAAFVDSYCWAAVQQKNSLQSESGNLPLWLH) are Extracellular-facing. Disulfide bonds link C66/C264 and C84/C245. The chain crosses the membrane as a helical span at residues 107-127 (KFFPYILLLFAILLYLPALFW). At 128 to 216 (RFAAAPHLCS…HLIMKYISCR (89 aa)) the chain is on the cytoplasmic side. Y198 is subject to Phosphotyrosine. A helical transmembrane segment spans residues 217 to 237 (LVTFAVVLLACIYLSYYFSLS). Residues 238–277 (SLSDEFLCSIKSGVLRNDSTIPDSFQCKLIAVGIFQLLSL) are Extracellular-facing. N-linked (GlcNAc...) asparagine glycosylation occurs at N254. The helical transmembrane segment at 278-298 (INLLVYALLVPVVIYTLFVPF) threads the bilayer. Residues 299-426 (RQKTDVLKVY…SRQRLLNSSC (128 aa)) lie on the Cytoplasmic side of the membrane. An S-nitrosocysteine modification is found at C346. Residues 407-426 (ETAANNGEKNSRQRLLNSSC) form a disordered region.

It belongs to the pannexin family. Homoheptameric. In terms of processing, S-nitrosylation inhibits channel currents and ATP release. N-glycosylation plays a role in cell surface targeting. Glycosylation at its extracellular surface makes unlikely that two oligomers could dock to form an intercellular channel such as in gap junctions. Exists in three glycosylation states: non-glycosylated (GLY0), high-mannose glycosylated (GLY1), and fully mature glycosylated (GLY2). Post-translationally, cleaved by CASP3 and CASP7 during apoptosis. Cleavage opens the channel for the release of metabolites and induces plasma membrane permeability during apoptosis. In terms of processing, phosphorylated at Tyr-198 by SRC. Phosphorylation activates ATP release. Constitutively phosphorylated in vascular smooth muscle cells. As to expression, expressed in the eye, thyroid, prostate, kidney and liver. Abundantly expressed in the CNS, including hippocampus, olfactory bulb, cortex, cerebellum and white matter.

It localises to the cell membrane. It is found in the endoplasmic reticulum membrane. It catalyses the reaction Ca(2+)(in) = Ca(2+)(out). The enzyme catalyses ATP(in) = ATP(out). It carries out the reaction K(+)(in) = K(+)(out). The catalysed reaction is chloride(in) = chloride(out). It catalyses the reaction iodide(out) = iodide(in). The enzyme catalyses Na(+)(in) = Na(+)(out). It carries out the reaction nitrate(in) = nitrate(out). The catalysed reaction is L-aspartate(out) = L-aspartate(in). It catalyses the reaction L-glutamate(out) = L-glutamate(in). The enzyme catalyses D-gluconate(in) = D-gluconate(out). It carries out the reaction spermidine(in) = spermidine(out). Its function is as follows. Ion channel involved in a variety of physiological functions such as blood pressure regulation, apoptotic cell clearance and oogenesis. Forms anion-selective channels with relatively low conductance and an order of permeabilities: nitrate&gt;iodide&gt;chlroride&gt;&gt;aspartate=glutamate=gluconate. Can release ATP upon activation through phosphorylation or cleavage at C-terminus. May play a role as a Ca(2+)-leak channel to regulate ER Ca(2+) homeostasis. During apoptosis, the C terminal tail is cleaved by caspases, which opens the main pore acting as a large-pore ATP efflux channel with a broad distribution, which allows the regulated release of molecules and ions smaller than 1 kDa, such as nucleotides ATP and UTP, and selective plasma membrane permeability to attract phagocytes that engulf the dying cells. This is Pannexin-1 (Panx1) from Rattus norvegicus (Rat).